The chain runs to 1003 residues: Helicase-like transcription factor (1003 aa).

Arginine 27 is modified (omega-N-methylarginine). The interval 38 to 287 (EFQDIIPPDD…FSVKERPENV (250 aa)) is DNA-binding. Residue lysine 112 forms a Glycyl lysine isopeptide (Lys-Gly) (interchain with G-Cter in SUMO2) linkage. Tyrosine 195 is modified (phosphotyrosine; by JAK2). Lysine 211 participates in a covalent cross-link: Glycyl lysine isopeptide (Lys-Gly) (interchain with G-Cter in SUMO2). 294–301 (DDMGLGKT) lines the ATP pocket. A disordered region spans residues 317–373 (PLLSKRGKKNHPGKEYKDETIKRRGSNMDKKEDGHSESSTCGEEPSISGTPEKSSCT). Basic and acidic residues predominate over residues 328 to 352 (PGKEYKDETIKRRGSNMDKKEDGHS). The span at 353–373 (ESSTCGEEPSISGTPEKSSCT) shows a compositional bias: polar residues. Serine 394, serine 395, and serine 397 each carry phosphoserine. A Helicase ATP-binding domain is found at 433–600 (DSKFALTFFA…WSLLSFLKLK (168 aa)). Residues 551–554 (DEGH) carry the DEGH box motif. Threonine 730 carries the post-translational modification Phosphothreonine. The RING-type zinc finger occupies 754-795 (CAICLDSLTFPVITHCAHVFCKPCICQVIHSEQPHAKCPLCR). Positions 831–990 (ALMHALIELR…TKKTDANDMK (160 aa)) constitute a Helicase C-terminal domain. The segment at 919–1003 (SRVFLMDPAW…INEIRTLIDL (85 aa)) is interaction with SP1 and SP3.

Belongs to the SNF2/RAD54 helicase family. RAD16 subfamily. As to quaternary structure, interacts with SP1 and SP3 independently of DNA; the interaction with these transcriptional factors may be required for basal transcription of target genes. Interacts with EGR1; the interaction requires prior binding to DNA and represses c-Rel via a DNA looping mechanism. Interacts with GATA4. Interacts with PCNA; the interaction promotes polyubiquitination of PCNA through association with the UBE2B-RAD18 and UBE2V2-UBE2N ubiquitin ligase complexes. Interacts with RAD18, SHPRH, UBE2V2 and UBE2N. Expressed in brain, heart, kidney, liver, lung, pancreas, placenta and skeletal muscle.

Its subcellular location is the cytoplasm. It is found in the nucleus. It localises to the nucleolus. The protein resides in the nucleoplasm. It carries out the reaction S-ubiquitinyl-[E2 ubiquitin-conjugating enzyme]-L-cysteine + [acceptor protein]-L-lysine = [E2 ubiquitin-conjugating enzyme]-L-cysteine + N(6)-ubiquitinyl-[acceptor protein]-L-lysine.. The protein operates within protein modification; protein ubiquitination. In terms of biological role, has both helicase and E3 ubiquitin ligase activities. Possesses intrinsic ATP-dependent nucleosome-remodeling activity. This activity may be required for transcriptional activation or repression of specific target promoters. These may include the SERPINE1, to which this protein can bind directly. Plays a role in error-free postreplication repair (PRR) of damaged DNA and maintains genomic stability through acting as a ubiquitin ligase for 'Lys-63'-linked polyubiquitination of chromatin-bound PCNA. This is Helicase-like transcription factor (Hltf) from Mus musculus (Mouse).